Here is a 503-residue protein sequence, read N- to C-terminus: Lanosterol 14-alpha demethylase (503 aa).

The chain crosses the membrane as a helical span at residues 24-44; sequence GNLLSTLLIACAFTLSLVYLF. Residue C449 participates in heme binding.

This sequence belongs to the cytochrome P450 family. The cofactor is heme. Post-translationally, ubiquitinated by MARCHF6, leading to proteasomal degradation.

The protein resides in the endoplasmic reticulum membrane. The protein localises to the microsome membrane. The catalysed reaction is a 14alpha-methyl steroid + 3 reduced [NADPH--hemoprotein reductase] + 3 O2 = a Delta(14) steroid + formate + 3 oxidized [NADPH--hemoprotein reductase] + 4 H2O + 4 H(+). The enzyme catalyses lanosterol + 3 reduced [NADPH--hemoprotein reductase] + 3 O2 = 4,4-dimethyl-5alpha-cholesta-8,14,24-trien-3beta-ol + formate + 3 oxidized [NADPH--hemoprotein reductase] + 4 H2O + 4 H(+). It carries out the reaction 24,25-dihydrolanosterol + 3 reduced [NADPH--hemoprotein reductase] + 3 O2 = 4,4-dimethyl-8,14-cholestadien-3beta-ol + formate + 3 oxidized [NADPH--hemoprotein reductase] + 4 H2O + 4 H(+). It catalyses the reaction a 14alpha-methyl steroid + reduced [NADPH--hemoprotein reductase] + O2 = a 14alpha-hydroxymethyl steroid + oxidized [NADPH--hemoprotein reductase] + H2O + H(+). The catalysed reaction is a 14alpha-hydroxymethyl steroid + reduced [NADPH--hemoprotein reductase] + O2 = a 14alpha-formyl steroid + oxidized [NADPH--hemoprotein reductase] + 2 H2O + H(+). The enzyme catalyses a 14alpha-formyl steroid + reduced [NADPH--hemoprotein reductase] + O2 = a Delta(14) steroid + formate + oxidized [NADPH--hemoprotein reductase] + H2O + 2 H(+). It carries out the reaction lanosterol + reduced [NADPH--hemoprotein reductase] + O2 = 32-hydroxylanosterol + oxidized [NADPH--hemoprotein reductase] + H2O + H(+). It catalyses the reaction 32-hydroxylanosterol + reduced [NADPH--hemoprotein reductase] + O2 = 32-oxolanosterol + oxidized [NADPH--hemoprotein reductase] + 2 H2O + H(+). The catalysed reaction is 32-oxolanosterol + reduced [NADPH--hemoprotein reductase] + O2 = 4,4-dimethyl-5alpha-cholesta-8,14,24-trien-3beta-ol + formate + oxidized [NADPH--hemoprotein reductase] + H2O + 2 H(+). The enzyme catalyses 24,25-dihydrolanosterol + reduced [NADPH--hemoprotein reductase] + O2 = 32-hydroxy-24,25-dihydrolanosterol + oxidized [NADPH--hemoprotein reductase] + H2O + H(+). It carries out the reaction 32-hydroxy-24,25-dihydrolanosterol + reduced [NADPH--hemoprotein reductase] + O2 = 32-oxo-24,25-dihydrolanosterol + oxidized [NADPH--hemoprotein reductase] + 2 H2O + H(+). It catalyses the reaction 32-oxo-24,25-dihydrolanosterol + reduced [NADPH--hemoprotein reductase] + O2 = 4,4-dimethyl-8,14-cholestadien-3beta-ol + formate + oxidized [NADPH--hemoprotein reductase] + H2O + 2 H(+). It functions in the pathway steroid biosynthesis; zymosterol biosynthesis; zymosterol from lanosterol: step 1/6. With respect to regulation, inhibited by azalanstat. Inhibited by azole antifungal agents ketoconazole, itraconazole and fluconazole. Its function is as follows. Sterol 14alpha-demethylase that plays a critical role in the cholesterol biosynthesis pathway, being cholesterol the major sterol component in mammalian membranes as well as a precursor for bile acid and steroid hormone synthesis. Cytochrome P450 monooxygenase that catalyzes the three-step oxidative removal of the 14alpha-methyl group (C-32) of sterols such as lanosterol (lanosta-8,24-dien-3beta-ol) and 24,25-dihydrolanosterol (DHL) in the form of formate, and converts the sterols to 4,4-dimethyl-5alpha-cholesta-8,14,24-trien-3beta-ol and 4,4-dimethyl-8,14-cholestadien-3beta-ol, respectively, which are intermediates of cholesterol biosynthesis. Can also demethylate substrates not intrinsic to mammals, such as eburicol (24-methylene-24,25-dihydrolanosterol), but at a lower rate than DHL. This is Lanosterol 14-alpha demethylase from Mus musculus (Mouse).